Here is a 98-residue protein sequence, read N- to C-terminus: NADH-ubiquinone oxidoreductase chain 4L (98 aa).

Helical transmembrane passes span 1 to 21 (MSIVYINIFLAFIMSLLGMLI), 29 to 49 (SLLCLEGMMLSLFVMITLIIL), and 61 to 81 (IILLVFAACEAALGLSLLVMV).

Belongs to the complex I subunit 4L family. As to quaternary structure, core subunit of respiratory chain NADH dehydrogenase (Complex I) which is composed of 45 different subunits.

Its subcellular location is the mitochondrion inner membrane. It carries out the reaction a ubiquinone + NADH + 5 H(+)(in) = a ubiquinol + NAD(+) + 4 H(+)(out). In terms of biological role, core subunit of the mitochondrial membrane respiratory chain NADH dehydrogenase (Complex I) which catalyzes electron transfer from NADH through the respiratory chain, using ubiquinone as an electron acceptor. Part of the enzyme membrane arm which is embedded in the lipid bilayer and involved in proton translocation. This is NADH-ubiquinone oxidoreductase chain 4L (MT-ND4L) from Herpestes javanicus (Small Indian mongoose).